A 665-amino-acid polypeptide reads, in one-letter code: Probable arginine--tRNA ligase, cytoplasmic (665 aa).

L-arginine contacts are provided by residues 204 to 206, H215, Y390, D394, and Q418; that span reads SPN. The 'HIGH' region signature appears at 205 to 216; it reads PNIAKQMHVGHL. An interaction with tRNA region spans residues 535 to 549; sequence NTAVYLLYTYTRICS.

The protein belongs to the class-I aminoacyl-tRNA synthetase family.

It is found in the cytoplasm. It localises to the cytosol. The enzyme catalyses tRNA(Arg) + L-arginine + ATP = L-arginyl-tRNA(Arg) + AMP + diphosphate. In terms of biological role, forms part of a macromolecular complex that catalyzes the attachment of specific amino acids to cognate tRNAs during protein synthesis. The protein is Probable arginine--tRNA ligase, cytoplasmic of Drosophila melanogaster (Fruit fly).